Reading from the N-terminus, the 189-residue chain is Peptidyl-tRNA hydrolase (189 aa).

Histidine 14 provides a ligand contact to tRNA. Histidine 19 serves as the catalytic Proton acceptor. TRNA contacts are provided by tyrosine 64, asparagine 66, and asparagine 112.

The protein belongs to the PTH family. Monomer.

It localises to the cytoplasm. It catalyses the reaction an N-acyl-L-alpha-aminoacyl-tRNA + H2O = an N-acyl-L-amino acid + a tRNA + H(+). In terms of biological role, hydrolyzes ribosome-free peptidyl-tRNAs (with 1 or more amino acids incorporated), which drop off the ribosome during protein synthesis, or as a result of ribosome stalling. Catalyzes the release of premature peptidyl moieties from peptidyl-tRNA molecules trapped in stalled 50S ribosomal subunits, and thus maintains levels of free tRNAs and 50S ribosomes. The chain is Peptidyl-tRNA hydrolase from Chlorobium phaeobacteroides (strain BS1).